We begin with the raw amino-acid sequence, 338 residues long: Ferredoxin--NADP reductase (338 aa).

The FAD site is built by aspartate 35, glutamine 43, tyrosine 48, alanine 88, phenylalanine 122, aspartate 289, and threonine 330.

Belongs to the ferredoxin--NADP reductase type 2 family. Homodimer. FAD serves as cofactor.

It carries out the reaction 2 reduced [2Fe-2S]-[ferredoxin] + NADP(+) + H(+) = 2 oxidized [2Fe-2S]-[ferredoxin] + NADPH. In Ehrlichia chaffeensis (strain ATCC CRL-10679 / Arkansas), this protein is Ferredoxin--NADP reductase.